The sequence spans 304 residues: CRISPR-associated endonuclease Cas1 (304 aa).

The Mn(2+) site is built by Glu148, His204, and Glu219.

This sequence belongs to the CRISPR-associated endonuclease Cas1 family. Homodimer, forms a heterotetramer with a Cas2 homodimer. The cofactor is Mg(2+). Mn(2+) serves as cofactor.

CRISPR (clustered regularly interspaced short palindromic repeat), is an adaptive immune system that provides protection against mobile genetic elements (viruses, transposable elements and conjugative plasmids). CRISPR clusters contain spacers, sequences complementary to antecedent mobile elements, and target invading nucleic acids. CRISPR clusters are transcribed and processed into CRISPR RNA (crRNA). Acts as a dsDNA endonuclease. Involved in the integration of spacer DNA into the CRISPR cassette. This chain is CRISPR-associated endonuclease Cas1, found in Neisseria meningitidis serogroup C (strain 8013).